The following is a 117-amino-acid chain: Large ribosomal subunit protein bL20c (117 aa).

This sequence belongs to the bacterial ribosomal protein bL20 family.

The protein localises to the plastid. It is found in the chloroplast. Binds directly to 23S ribosomal RNA and is necessary for the in vitro assembly process of the 50S ribosomal subunit. It is not involved in the protein synthesizing functions of that subunit. The protein is Large ribosomal subunit protein bL20c of Lobularia maritima (Sweet alyssum).